Reading from the N-terminus, the 62-residue chain is Large ribosomal subunit protein bL32 (62 aa).

Residues 28-62 (SIEPTTGEVHRRHHISPDGFYRGRQVIKAKEQDEE) form a disordered region.

This sequence belongs to the bacterial ribosomal protein bL32 family.

This chain is Large ribosomal subunit protein bL32, found in Thioalkalivibrio sulfidiphilus (strain HL-EbGR7).